A 228-amino-acid polypeptide reads, in one-letter code: Cytochrome c oxidase subunit 2 (228 aa).

Topologically, residues 1 to 26 are mitochondrial intermembrane; it reads MATWANLGLQNSSSPLMEQLNFFHDH. A helical membrane pass occupies residues 27 to 48; sequence TVLILIMITVMITYVMGMLFFN. The Mitochondrial matrix portion of the chain corresponds to 49–62; that stretch reads KFTNRYLLHGQTIE. The chain crosses the membrane as a helical span at residues 63–82; sequence IIWTILPAIILMFIAFPSLR. Residues 83–228 are Mitochondrial intermembrane-facing; the sequence is LLYLLDEINS…FIKWVSSQLN (146 aa). The Cu cation site is built by His-161, Cys-196, Glu-198, Cys-200, His-204, and Met-207. Glu-198 is a Mg(2+) binding site.

It belongs to the cytochrome c oxidase subunit 2 family. Component of the cytochrome c oxidase (complex IV, CIV), a multisubunit enzyme composed of a catalytic core of 3 subunits and several supernumerary subunits. The complex exists as a monomer or a dimer and forms supercomplexes (SCs) in the inner mitochondrial membrane with ubiquinol-cytochrome c oxidoreductase (cytochrome b-c1 complex, complex III, CIII). Requires Cu cation as cofactor.

The protein resides in the mitochondrion inner membrane. It carries out the reaction 4 Fe(II)-[cytochrome c] + O2 + 8 H(+)(in) = 4 Fe(III)-[cytochrome c] + 2 H2O + 4 H(+)(out). In terms of biological role, component of the cytochrome c oxidase, the last enzyme in the mitochondrial electron transport chain which drives oxidative phosphorylation. The respiratory chain contains 3 multisubunit complexes succinate dehydrogenase (complex II, CII), ubiquinol-cytochrome c oxidoreductase (cytochrome b-c1 complex, complex III, CIII) and cytochrome c oxidase (complex IV, CIV), that cooperate to transfer electrons derived from NADH and succinate to molecular oxygen, creating an electrochemical gradient over the inner membrane that drives transmembrane transport and the ATP synthase. Cytochrome c oxidase is the component of the respiratory chain that catalyzes the reduction of oxygen to water. Electrons originating from reduced cytochrome c in the intermembrane space (IMS) are transferred via the dinuclear copper A center (CU(A)) of subunit 2 and heme A of subunit 1 to the active site in subunit 1, a binuclear center (BNC) formed by heme A3 and copper B (CU(B)). The BNC reduces molecular oxygen to 2 water molecules using 4 electrons from cytochrome c in the IMS and 4 protons from the mitochondrial matrix. The chain is Cytochrome c oxidase subunit 2 (COII) from Culex quinquefasciatus (Southern house mosquito).